The primary structure comprises 418 residues: cAMP-dependent protein kinase type II-beta regulatory subunit (418 aa).

A dimerization and phosphorylation region spans residues 2-153; the sequence is SIEIPAGLTE…RLQEACKDIL (152 aa). Residues 48–57 are compositionally biased toward basic and acidic residues; that stretch reads TARFGHEGRT. The tract at residues 48–96 is disordered; that stretch reads TARFGHEGRTWGDLGAAAGGGTPSKGVNFAEEPMQSDSEDGEEEEAAPA. Residue Thr-69 is modified to Phosphothreonine. A phosphoserine mark is found at Ser-83, Ser-85, and Ser-114. Residues 84–94 show a composition bias toward acidic residues; sequence DSEDGEEEEAA. Residues 154 to 275, Glu-223, Arg-232, 276 to 418, Glu-352, and Arg-361 contribute to the 3',5'-cyclic AMP site; these read LFKN…ESLP and FLKS…EPTA.

This sequence belongs to the cAMP-dependent kinase regulatory chain family. The inactive form of the enzyme is composed of two regulatory chains and two catalytic chains. Activation by cAMP produces two active catalytic monomers and a regulatory dimer that binds four cAMP molecules. Interacts with PRKACA and PRKACB. Interacts with the phosphorylated form of PJA2. Forms a complex composed of PRKAR2B, GSK3B and GSKIP through GSKIP interaction; facilitates PKA-induced phosphorylation and regulates GSK3B activity. Phosphorylated by the activated catalytic chain. As to expression, four types of regulatory chains are found: I-alpha, I-beta, II-alpha, and II-beta. Their expression varies among tissues and is in some cases constitutive and in others inducible.

It is found in the cytoplasm. The protein localises to the cell membrane. Functionally, regulatory subunit of the cAMP-dependent protein kinases involved in cAMP signaling in cells. Type II regulatory chains mediate membrane association by binding to anchoring proteins, including the MAP2 kinase. This chain is cAMP-dependent protein kinase type II-beta regulatory subunit (PRKAR2B), found in Homo sapiens (Human).